The chain runs to 801 residues: Glycerol-3-phosphate acyltransferase 2, mitochondrial (801 aa).

Residues 1-24 form a disordered region; that stretch reads MDTMLKSNPQTQQRSNHNGQETSL. The Cytoplasmic segment spans residues 1-305; sequence MDTMLKSNPQ…PGPRLSALGQ (305 aa). The acyltransferase stretch occupies residues 180–290; it reads QLHKGQMKMV…SGQPLLIFLE (111 aa). The HXXXXD motif motif lies at 205 to 210; sequence HKSLLD. A helical transmembrane segment spans residues 306-332; sequence AWLGVVIQAVQAGIISDATLVPVAIAY. The Mitochondrial intermembrane portion of the chain corresponds to 333-449; the sequence is DLVPDAPCNM…QLLVRRLSRH (117 aa). A helical transmembrane segment spans residues 450–472; the sequence is VLSASVASSAVMSTAIMATLLLL. Over 473–801 the chain is Cytoplasmic; that stretch reads KHQKGVVLSQ…EQFIRQFICS (329 aa). A Phosphoserine modification is found at Ser662. Residue Thr666 is modified to Phosphothreonine. Residues Ser668 and Ser670 each carry the phosphoserine modification.

Belongs to the GPAT/DAPAT family. Interacts with PIWIL2. As to expression, highly expressed in the testis. Expressed at lower levels in the heart, liver, kidney, spleen and adipose cells. Only detected in primary spermatocytes.

It is found in the mitochondrion outer membrane. It catalyses the reaction sn-glycerol 3-phosphate + an acyl-CoA = a 1-acyl-sn-glycero-3-phosphate + CoA. The catalysed reaction is a 1-acyl-sn-glycero-3-phosphate + an acyl-CoA = a 1,2-diacyl-sn-glycero-3-phosphate + CoA. It carries out the reaction 1-(9Z-octadecenoyl)-sn-glycero-3-phosphate + (9Z)-octadecenoyl-CoA = 1,2-di-(9Z-octadecenoyl)-sn-glycero-3-phosphate + CoA. The enzyme catalyses 1-(9Z-octadecenoyl)-sn-glycero-3-phosphate + (5Z,8Z,11Z,14Z)-eicosatetraenoyl-CoA = 1-(9Z)-octadecenoyl-2-(5Z,8Z,11Z,14Z)-eicosatetraenoyl-sn-glycero-3-phosphate + CoA. It catalyses the reaction (5Z,8Z,11Z,14Z)-eicosatetraenoyl-CoA + sn-glycerol 3-phosphate = 1-(5Z,8Z,11Z,14Z-eicosatetraenoyl)-sn-glycero-3-phosphate + CoA. It participates in phospholipid metabolism; CDP-diacylglycerol biosynthesis; CDP-diacylglycerol from sn-glycerol 3-phosphate: step 1/3. Its activity is regulated as follows. Inhibited by N-ethylmaleimide (NEM). Its function is as follows. Transfers an acyl-group from acyl-ACP to the sn-1 position of glycerol-3-phosphate producing a lysophosphatidic acid (LPA), an essential step for the triacylglycerol (TAG) and glycerophospholipids. In vitro also transfers an acyl-group from acyl-ACP to the LPA producing a phosphatidic acid (PA). Prefers arachidonoyl-CoA as the acyl donor. Required for primary processing step during piRNA biosynthesis. Molecular mechanisms by which it promotes piRNA biosynthesis are unclear and do not involve its acyltransferase activity. The polypeptide is Glycerol-3-phosphate acyltransferase 2, mitochondrial (Mus musculus (Mouse)).